The sequence spans 408 residues: Metacaspase-1B (408 aa).

The interval 1–98 (MYHRHSAPPP…PPLEAQQFGN (98 aa)) is disordered. Pro residues-rich tracts occupy residues 24–49 (WPPP…FPPP) and 56–66 (SPYPTPPPHSP). Catalysis depends on residues histidine 199 and cysteine 255.

It belongs to the peptidase C14B family.

Functionally, involved in cell death (apoptosis). Required for the apoptotic-like loss of membrane phospholipid asymmetry at stationary phase and facilitates growth under conditions of endoplasmic reticulum stress. The polypeptide is Metacaspase-1B (casB) (Aspergillus fumigatus (strain CBS 144.89 / FGSC A1163 / CEA10) (Neosartorya fumigata)).